Consider the following 115-residue polypeptide: MICRSPLIVVMLFVIAAHTVLALEIATRIDASETESPVSAQMTRVSYRPITSVDNKRFLRQETTFEKKLGVNDVHAVHAEERSALGKAKILGRDLLWFMSILGRFLIPRIGRRGP.

Positions 1–22 (MICRSPLIVVMLFVIAAHTVLA) are cleaved as a signal peptide. The RxLR-dEER motif lies at 57 to 82 (RFLRQETTFEKKLGVNDVHAVHAEER).

This sequence belongs to the RxLR effector family.

The protein resides in the secreted. The protein localises to the host cytoplasm. Its subcellular location is the host nucleus. Functionally, effector that acts as a broad suppressor of cell death to interrupt plant immunity. Inhibits cell death induced by cell death-inducing proteins, including the PAMP elicitor INF1 from P.infestans. The chain is Secreted RxLR effector protein 2 from Plasmopara viticola (Downy mildew of grapevine).